Here is a 101-residue protein sequence, read N- to C-terminus: Small ribosomal subunit protein uS14 (101 aa).

Belongs to the universal ribosomal protein uS14 family. In terms of assembly, part of the 30S ribosomal subunit. Contacts proteins S3 and S10.

Functionally, binds 16S rRNA, required for the assembly of 30S particles and may also be responsible for determining the conformation of the 16S rRNA at the A site. The chain is Small ribosomal subunit protein uS14 from Polynucleobacter asymbioticus (strain DSM 18221 / CIP 109841 / QLW-P1DMWA-1) (Polynucleobacter necessarius subsp. asymbioticus).